Here is a 373-residue protein sequence, read N- to C-terminus: Potential protein lysine methyltransferase SET6 (373 aa).

In terms of domain architecture, SET spans 12–338 (PFFQVRQTKW…KDEQICIDYS (327 aa)).

The protein belongs to the class V-like SAM-binding methyltransferase superfamily.

In terms of biological role, involved in resistance to compounds that target ergosterol biosynthesis, including fenpropimorph, dyclonine, and alverine citrate. Since a deletion in the absence of these compounds does not have an effect on growth, is more likely to be involved in compound availability. This chain is Potential protein lysine methyltransferase SET6 (SET6), found in Saccharomyces cerevisiae (strain ATCC 204508 / S288c) (Baker's yeast).